A 790-amino-acid chain; its full sequence is PGC-1 and ERR-induced regulator in muscle protein 1 (790 aa).

Disordered stretches follow at residues 38-391 (LLSS…TPIS), 425-449 (VASS…STPV), 507-545 (SVAG…EAVA), and 626-648 (QRSR…APIP). Low complexity predominate over residues 40 to 52 (SSDIDQGDSSGSS). Composition is skewed to polar residues over residues 80 to 89 (ATQQPVSRSQ) and 98 to 107 (TGQQTPSTSA). Residues 111–123 (APPSLGPGASPPS) show a composition bias toward low complexity. Positions 146–157 (APRPPGEPPGSP) are enriched in pro residues. Low complexity predominate over residues 158-169 (KSPGHSTGSQRP). Residues 170 to 179 (PDSPGAPPRS) are compositionally biased toward pro residues. Residues 366–391 (KPQSDTAVSTPASEPQSSVALSTPIS) show a composition bias toward polar residues. Polar residues predominate over residues 515–532 (KPGSGQASARPSAPQTAT). Pro residues predominate over residues 635 to 648 (EPLPRADPVPAPIP).

Muscle-specific expression is increased by endurance exercise.

The protein resides in the cytoplasm. The protein localises to the nucleus. Its function is as follows. Regulates the expression of selective PPARGC1A/B and ESRRA/B/G target genes with roles in glucose and lipid metabolism, energy transfer, contractile function, muscle mitochondrial biogenesis and oxidative capacity. Required for the efficient induction of MT-CO2, MT-CO3, COX4I1, TFB1M, TFB2M, POLRMT and SIRT3 by PPARGC1A. Positively regulates the PPARGC1A/ESRRG-induced expression of CKMT2, TNNI3 and SLC2A4 and negatively regulates the PPARGC1A/ESRRG-induced expression of PDK4. This is PGC-1 and ERR-induced regulator in muscle protein 1 (PERM1) from Homo sapiens (Human).